Consider the following 477-residue polypeptide: MNFETVIGLEVHVELKTNSKIFSPAPAHFGEDPNANTNIIDWSFPGVLPVMNKGVIDYGIKAALALNMDIHQKMHFDRKNYFYPDNPKAYQISQFDEPIGYNGWIEIELEDGTTKKIRIERAHLEEDAGKNTHGSDGYSYVDLNRQGVPLIEIVSEADMRSPEEAYAYLTALKEIIQYTGISDVKMEEGSMRVDANISIRPYGQEEFGTKTELKNLNSFNFVRKGLAFEEKRQAEILRSGGQIRQETRRYDEATGETLLMRVKEGSADYRYFPEPDLPIFEIEDAWIEQVRSSLPAFPKERRAKYVGDYGLSDYDAKQLTATKAVSDFFEAALAAGGDAKAVSNWLQGEVAQYLNAEGKTISEIELTPENLTEMIALIADGTISSKIAKKVFVHLAKNGGSAKEYVQKAGLIQISDPAQLLPIIQEVFANNEKAINDYKGGNKNAAKSLIGQLMKATKGQANPQVAQKLLNEELEKL.

It belongs to the GatB/GatE family. GatB subfamily. Heterotrimer of A, B and C subunits.

The catalysed reaction is L-glutamyl-tRNA(Gln) + L-glutamine + ATP + H2O = L-glutaminyl-tRNA(Gln) + L-glutamate + ADP + phosphate + H(+). It catalyses the reaction L-aspartyl-tRNA(Asn) + L-glutamine + ATP + H2O = L-asparaginyl-tRNA(Asn) + L-glutamate + ADP + phosphate + 2 H(+). Its function is as follows. Allows the formation of correctly charged Asn-tRNA(Asn) or Gln-tRNA(Gln) through the transamidation of misacylated Asp-tRNA(Asn) or Glu-tRNA(Gln) in organisms which lack either or both of asparaginyl-tRNA or glutaminyl-tRNA synthetases. The reaction takes place in the presence of glutamine and ATP through an activated phospho-Asp-tRNA(Asn) or phospho-Glu-tRNA(Gln). The polypeptide is Aspartyl/glutamyl-tRNA(Asn/Gln) amidotransferase subunit B (Streptococcus sanguinis (strain SK36)).